A 254-amino-acid chain; its full sequence is Metallo-beta-lactamase type 2 (254 aa).

The first 27 residues, 1 to 27 (MMKGWMKCGLAGAVVLMASFWGGSVRA), serve as a signal peptide directing secretion. Asp99 contributes to the Zn(2+) binding site. 2 residues coordinate substrate: Thr135 and His174. Residue Cys193 coordinates Zn(2+). Positions 196 and 201 each coordinate substrate. His231 is a Zn(2+) binding site.

It belongs to the metallo-beta-lactamase superfamily. Class-B beta-lactamase family. In terms of assembly, monomer. It depends on Zn(2+) as a cofactor.

It is found in the periplasm. It carries out the reaction a beta-lactam + H2O = a substituted beta-amino acid. Competitively inhibited by mercaptophosphonate and pyridine carboxylate derivatives. Also inhibited by the binding of a second zinc ion and by chelating agents such as EDTA. In terms of biological role, confers resistance to the different beta-lactams antibiotics (penicillin, cephalosporin and carbapenem) via the hydrolysis of the beta-lactam ring. It is able to hydrolyze penicillin and imipenem, but is much less active against cephalothin, cefotaxime, meropenem and ceftazidime. This Aeromonas hydrophila protein is Metallo-beta-lactamase type 2.